The sequence spans 301 residues: Probable alpha-L-glutamate ligase (301 aa).

Positions 104–287 constitute an ATP-grasp domain; it reads LQLLSRRGIG…VAGMIIEYLE (184 aa). ATP is bound by residues Lys141, 178–179, Asp187, and 211–213; these read EY and RSN. Residues Asp248, Glu260, and Asn262 each contribute to the Mg(2+) site. Positions 248, 260, and 262 each coordinate Mn(2+).

Belongs to the RimK family. Mg(2+) is required as a cofactor. The cofactor is Mn(2+).

The polypeptide is Probable alpha-L-glutamate ligase (Pseudomonas savastanoi pv. phaseolicola (strain 1448A / Race 6) (Pseudomonas syringae pv. phaseolicola (strain 1448A / Race 6))).